We begin with the raw amino-acid sequence, 768 residues long: Eukaryotic elongation factor 2 kinase (768 aa).

Polar residues predominate over residues 1–17; it reads MTIDTTNESDNSPTNSP. A disordered region spans residues 1–21; it reads MTIDTTNESDNSPTNSPGLEA. Residues 102-309 enclose the Alpha-type protein kinase domain; sequence RYSAIRKQWT…ICETMDLSNF (208 aa). ATP is bound at residue 279 to 284; that stretch reads GDGNLG. A compositionally biased stretch (acidic residues) spans 402-411; sequence SEDEEDEEED. The tract at residues 402-446 is disordered; that stretch reads SEDEEDEEEDYPRSEKSGNSQKSRRSRMSISTRSSGDESASRPRK.

The protein belongs to the protein kinase superfamily. Alpha-type protein kinase family. Monomer or homodimer. Interacts with cmd-1 in the presence of Ca(2+).

It carries out the reaction [translation elongation factor 2] + ATP = [translation elongation factor 2]-phosphate + ADP + H(+). Calcium(2+)/calmodulin dependent activity. Undergoes calcium/calmodulin-dependent intramolecular autophosphorylation, and this results in it becoming partially calcium/calmodulin-independent. Phosphorylates elongation factor-2 (eEF-2) at two threonine residues that are conserved in all eukaryotes and are located within a GTP-binding domain. Calcium(2+)/calmodulin dependent activity. Inactivates eEF-2 by catalyzing its phosphorylation. eEF-2 catalyzes the movement of the ribosome along mRNA during translation in eukaryotic cells. The sequence is that of Eukaryotic elongation factor 2 kinase (efk-1) from Caenorhabditis elegans.